The primary structure comprises 1072 residues: Zinc finger MIZ domain-containing protein 1 (1072 aa).

Residues 1–120 form a sufficient for transactivation activity; sufficient for interaction with NOTCH1 region; it reads MNSMDRHIQQ…HQKSRQNDPP (120 aa). A Glycyl lysine isopeptide (Lys-Gly) (interchain with G-Cter in SUMO2) cross-link involves residue Lys91. Disordered regions lie at residues 112–141 and 362–538; these read QKSR…TLSH and TPSG…PYLS. A compositionally biased stretch (low complexity) spans 128-141; sequence PLSSMSSMKPTLSH. Polar residues predominate over residues 419–436; it reads YGNQQYGPNSQFPTQPGQ. The segment covering 437–446 has biased composition (pro residues); the sequence is YPTPNPPRPL. Residues 489 to 501 show a composition bias toward low complexity; sequence SSGSSYSSYSQGS. The span at 517 to 528 shows a compositional bias: pro residues; the sequence is SPVPGNPTPPMT. The segment at 734 to 815 adopts an SP-RING-type zinc-finger fold; the sequence is GEDGVEQTAI…MWGILNAIQH (82 aa). The Zn(2+) site is built by Cys765, His767, Cys788, and Cys791. Residues Lys841 and Lys850 each participate in a glycyl lysine isopeptide (Lys-Gly) (interchain with G-Cter in SUMO2) cross-link. A transactivation domain region spans residues 844–1072; that stretch reads PDGIPSKRFK…DDLLSLFENN (229 aa). The segment covering 875-886 has biased composition (pro residues); the sequence is GPSPYPLPPPPG. Positions 875-1072 are disordered; that stretch reads GPSPYPLPPP…DDLLSLFENN (198 aa). Composition is skewed to polar residues over residues 888 to 902 and 958 to 968; these read TSSN…NYQG and SSDQPHPSIQQ. The span at 988 to 1001 shows a compositional bias: pro residues; sequence APPPSQPPRQPPQA. Residues 1045–1072 show a composition bias toward low complexity; sequence PDELLSYLDPPDLPSNSNDDLLSLFENN.

In terms of assembly, interacts with AR, but not with ESR1, NR3C1, PGR, THRB nor VDR. Interacts with NOTCH1 and RBPJ. Interacts with SMARCA4. Interacts (via SP-RING-type domain) with SMAD3 and SMAD4 (via MH2 domain). As to expression, expressed in brain.

It localises to the nucleus. Its subcellular location is the nucleoplasm. It is found in the cytoplasm. In terms of biological role, acts as a transcriptional coactivator. Increases ligand-dependent transcriptional activity of AR and promotes AR sumoylation. The stimulation of AR activity is dependent upon sumoylation. Also functions as a transcriptional coactivator in the TGF-beta signaling pathway by increasing the activity of the SMAD3/SMAD4 transcriptional complex. Involved in transcriptional activation of a subset of NOTCH1 target genes including MYC. Involved in thymocyte and T cell development. Involved in the regulation of postmitotic positioning of pyramidal neurons in the developing cerebral cortex. The sequence is that of Zinc finger MIZ domain-containing protein 1 (Zmiz1) from Mus musculus (Mouse).